The primary structure comprises 60 residues: Prokaryotic ubiquitin-like protein UBact (60 aa).

The tract at residues 1–60 is disordered; it reads MPERKTQPTTDQPWTKPNDGGDESGPRSPEVERPNTRDLLERMKRVDPRQARRYRQRSGE. Basic and acidic residues predominate over residues 29–50; the sequence is PEVERPNTRDLLERMKRVDPRQ. Basic residues predominate over residues 51 to 60; the sequence is ARRYRQRSGE. An Isoglutamyl lysine isopeptide (Glu-Lys) (interchain with K-? in acceptor proteins) cross-link involves residue glutamate 60.

The protein belongs to the ubiquitin-like protein UBact family.

May function as a protein modifier covalently attached to lysine residues of substrate proteins. This may serve to target the modified proteins for degradation by proteasomes. The polypeptide is Prokaryotic ubiquitin-like protein UBact (Fraserbacteria sp. (strain RBG_16_55_9)).